Reading from the N-terminus, the 219-residue chain is N-(5'-phosphoribosyl)anthranilate isomerase (219 aa).

The protein belongs to the TrpF family.

The catalysed reaction is N-(5-phospho-beta-D-ribosyl)anthranilate = 1-(2-carboxyphenylamino)-1-deoxy-D-ribulose 5-phosphate. It functions in the pathway amino-acid biosynthesis; L-tryptophan biosynthesis; L-tryptophan from chorismate: step 3/5. The protein is N-(5'-phosphoribosyl)anthranilate isomerase of Chloroherpeton thalassium (strain ATCC 35110 / GB-78).